Consider the following 114-residue polypeptide: uncharacterized protein (114 aa).

May be associated with transposition functions of transposon Tn903. This is an uncharacterized protein from Escherichia coli.